The primary structure comprises 251 residues: Probable transcriptional regulatory protein SYO3AOP1_0685 (251 aa).

Belongs to the TACO1 family.

Its subcellular location is the cytoplasm. The protein is Probable transcriptional regulatory protein SYO3AOP1_0685 of Sulfurihydrogenibium sp. (strain YO3AOP1).